Consider the following 522-residue polypeptide: BTB/POZ domain-containing protein 16 (522 aa).

The BTB domain occupies 166 to 222 (INDPAVTRVAFALALKNLYMKEVEMTVDNVLGVLASAHILQFNRLFQKCVNMMMNRL).

In Mus musculus (Mouse), this protein is BTB/POZ domain-containing protein 16 (Btbd16).